The sequence spans 59 residues: Light-harvesting protein B-800-850 alpha chain E (59 aa).

Over Met1 to Lys11 the chain is Cytoplasmic. The chain crosses the membrane as a helical span at residues Pro12–Leu35. His31 serves as a coordination point for a bacteriochlorophyll. Topologically, residues Ser36 to Gly59 are periplasmic.

It belongs to the antenna complex alpha subunit family. The core complex is formed by different alpha and beta chains, binding bacteriochlorophyll molecules, and arranged most probably in tetrameric structures disposed around the reaction center. The non-pigmented gamma chains may constitute additional components.

It localises to the cell inner membrane. Antenna complexes are light-harvesting systems, which transfer the excitation energy to the reaction centers. The sequence is that of Light-harvesting protein B-800-850 alpha chain E (pucAE) from Rhodopseudomonas palustris (strain ATCC BAA-98 / CGA009).